The chain runs to 268 residues: Single-stranded DNA-binding protein WHY3, chloroplastic (268 aa).

The transit peptide at 1–75 (MSQLLSSPPM…KQRFGDSSSS (75 aa)) directs the protein to the chloroplast. Positions 93–98 (KGKAAL) are required for ssDNA binding. The Nuclear localization signal motif lies at 171-185 (KGKGSDEGKVRKVLK).

It belongs to the Whirly family. As to quaternary structure, homotetramer.

It localises to the plastid. It is found in the chloroplast. The protein resides in the nucleus. Functionally, single-stranded DNA-binding protein that functions in both chloroplasts and nucleus. In chloroplasts, maintains plastid genome stability by preventing break-induced and short homology-dependent illegitimate recombinations. In the nucleus, is recruited to a distal element upstream of the kinesin KP1 to mediate the transcriptional repression of KP1. Can bind double-stranded DNA in vivo. The protein is Single-stranded DNA-binding protein WHY3, chloroplastic (WHY3) of Arabidopsis thaliana (Mouse-ear cress).